A 197-amino-acid polypeptide reads, in one-letter code: Regulator of free ubiquitin chains 1 (197 aa).

The protein belongs to the RFU1 family.

It is found in the endosome. In terms of biological role, inhibitor of the DOA4 deubiquitinase involved in the regulation of protein degradation by the proteasome and maintenance of a normal level of free ubiquitin. This chain is Regulator of free ubiquitin chains 1 (RFU1), found in Vanderwaltozyma polyspora (strain ATCC 22028 / DSM 70294 / BCRC 21397 / CBS 2163 / NBRC 10782 / NRRL Y-8283 / UCD 57-17) (Kluyveromyces polysporus).